Reading from the N-terminus, the 382-residue chain is Histidine biosynthesis bifunctional protein HisB (382 aa).

Residues 1–190 form a histidinol-phosphatase region; that stretch reads MQKIVFIDRD…EIYEFLRLPA (190 aa). The active-site Nucleophile is the D8. Mg(2+) contacts are provided by D8, D10, and D129. Residue D10 is the Proton donor of the active site. The imidazoleglycerol-phosphate dehydratase stretch occupies residues 191 to 382; sequence RTALVERNTK…DNLPSTKGVL (192 aa).

In the N-terminal section; belongs to the histidinol-phosphatase family. The protein in the C-terminal section; belongs to the imidazoleglycerol-phosphate dehydratase family. The cofactor is Mg(2+).

It is found in the cytoplasm. It catalyses the reaction D-erythro-1-(imidazol-4-yl)glycerol 3-phosphate = 3-(imidazol-4-yl)-2-oxopropyl phosphate + H2O. It carries out the reaction L-histidinol phosphate + H2O = L-histidinol + phosphate. Its pathway is amino-acid biosynthesis; L-histidine biosynthesis; L-histidine from 5-phospho-alpha-D-ribose 1-diphosphate: step 6/9. The protein operates within amino-acid biosynthesis; L-histidine biosynthesis; L-histidine from 5-phospho-alpha-D-ribose 1-diphosphate: step 8/9. In Spirosoma linguale (strain ATCC 33905 / DSM 74 / LMG 10896 / Claus 1), this protein is Histidine biosynthesis bifunctional protein HisB.